The primary structure comprises 1057 residues: Adenylate-forming reductase stbB (1057 aa).

Residues 21–378 (STKRQPGAVC…FRLRTDMNFE (358 aa)) form an adenylation (A) domain region. AMP-binding positions include histidine 251, 344-345 (NF), threonine 349, and 423-426 (AVGR). In terms of domain architecture, Carrier spans 564-651 (ETLEEDIKAL…QMAAAIKNPS (88 aa)). Serine 600 is modified (O-(pantetheine 4'-phosphoryl)serine). The segment at 693–1025 (IVVVTGSSGS…SGAVILGTDV (333 aa)) is reductase (R) domain. NADP(+)-binding positions include 700–703 (SGSL), 783–785 (AAW), tyrosine 858, and lysine 862.

This sequence belongs to the adenylate-forming reductase family.

The catalysed reaction is ilicicolinate B + AH2 + ATP = ilicicolin B + A + AMP + diphosphate. The protein operates within secondary metabolite biosynthesis; terpenoid biosynthesis. Functionally, nonribosomal peptide synthase-like protein; part of the cluster that mediates the biosynthesis of LL-Z1272-beta, also known as ilicicolin B, a prenylated aryl-aldehyde produced by several fungi and that serves as a key pathway intermediate for many fungal meroterpenoids. The first step in the pathway is performed by the non-reducing polyketide synthase stbA that produces orsellinic acid by condensing acetyl-CoA with 3 malonyl-CoA units. The prenyltransferase stbC then prenylates orsenilic acid into grifolic acid. Finally, grifolic acid is reduced to ilicicolin B by the NRPS-like protein stbB. The protein is Adenylate-forming reductase stbB of Stachybotrys bisbyi (Hyalostachybotrys bisbyi).